Reading from the N-terminus, the 363-residue chain is Transcription factor PIF6 (363 aa).

Disordered stretches follow at residues 154–204 (SEGS…RNDI) and 340–363 (IPNP…KTNR). Residues 178 to 188 (RTRKALVKRKR) show a composition bias toward basic residues. One can recognise a bHLH domain in the interval 188 to 237 (RNAEAYNSPERNQRNDINKKMRTLQNLLPNSHKDDNESMLDEAINYMTNL). The segment covering 340–350 (IPNPNSLSNLD) has biased composition (polar residues). The span at 354 to 363 (LHKKSRKTNR) shows a compositional bias: basic residues.

Homodimer. Interacts with APRR1/TOC1. Binds to RGL2 and RGA. Associates to PTAC12/HMR/PAP5 which acts as a transcriptional coactivator. As to expression, mainly expressed in fruits and flowers and, to a lower extent, in leaves, stems, seedlings and roots.

It is found in the nucleus. In terms of biological role, transcription factor. In Arabidopsis thaliana (Mouse-ear cress), this protein is Transcription factor PIF6.